The chain runs to 803 residues: Leucine--tRNA ligase (803 aa).

The short motif at 40-51 (PYPSGAGLHVGH) is the 'HIGH' region element. The 'KMSKS' region motif lies at 575-579 (KMSKS). Lysine 578 lines the ATP pocket.

This sequence belongs to the class-I aminoacyl-tRNA synthetase family.

It localises to the cytoplasm. The catalysed reaction is tRNA(Leu) + L-leucine + ATP = L-leucyl-tRNA(Leu) + AMP + diphosphate. The protein is Leucine--tRNA ligase of Listeria monocytogenes serotype 4b (strain F2365).